A 312-amino-acid chain; its full sequence is Aspartate carbamoyltransferase catalytic subunit (312 aa).

2 residues coordinate carbamoyl phosphate: Arg-55 and Thr-56. Lys-83 serves as a coordination point for L-aspartate. The carbamoyl phosphate site is built by Arg-105, His-138, and Gln-141. Positions 171 and 225 each coordinate L-aspartate. 2 residues coordinate carbamoyl phosphate: Gly-266 and Pro-267.

It belongs to the aspartate/ornithine carbamoyltransferase superfamily. ATCase family. As to quaternary structure, heterododecamer (2C3:3R2) of six catalytic PyrB chains organized as two trimers (C3), and six regulatory PyrI chains organized as three dimers (R2).

It carries out the reaction carbamoyl phosphate + L-aspartate = N-carbamoyl-L-aspartate + phosphate + H(+). It functions in the pathway pyrimidine metabolism; UMP biosynthesis via de novo pathway; (S)-dihydroorotate from bicarbonate: step 2/3. Its function is as follows. Catalyzes the condensation of carbamoyl phosphate and aspartate to form carbamoyl aspartate and inorganic phosphate, the committed step in the de novo pyrimidine nucleotide biosynthesis pathway. In Corynebacterium efficiens (strain DSM 44549 / YS-314 / AJ 12310 / JCM 11189 / NBRC 100395), this protein is Aspartate carbamoyltransferase catalytic subunit.